A 432-amino-acid chain; its full sequence is Gamma-glutamyl phosphate reductase (432 aa).

Belongs to the gamma-glutamyl phosphate reductase family.

The protein resides in the cytoplasm. The catalysed reaction is L-glutamate 5-semialdehyde + phosphate + NADP(+) = L-glutamyl 5-phosphate + NADPH + H(+). It participates in amino-acid biosynthesis; L-proline biosynthesis; L-glutamate 5-semialdehyde from L-glutamate: step 2/2. Functionally, catalyzes the NADPH-dependent reduction of L-glutamate 5-phosphate into L-glutamate 5-semialdehyde and phosphate. The product spontaneously undergoes cyclization to form 1-pyrroline-5-carboxylate. This Brachyspira hyodysenteriae (strain ATCC 49526 / WA1) protein is Gamma-glutamyl phosphate reductase.